Consider the following 2104-residue polypeptide: Phenolphthiocerol synthesis polyketide synthase type I Pks15/1 (2104 aa).

In terms of domain architecture, Ketosynthase family 3 (KS3) spans 41 to 464; the sequence is TEPVAVVGIG…GTNAHVILEE (424 aa). Catalysis depends on for beta-ketoacyl synthase activity residues cysteine 211, histidine 346, and histidine 386. Positions 571 to 887 are acyltransferase; sequence TAVVFPGQGS…GQLFSTGMSV (317 aa). The active-site For acyltransferase activity is the serine 662. The N-terminal hotdog fold stretch occupies residues 935–1057; it reads HALLGAVVER…GMLGVEAASS (123 aa). The tract at residues 935–1095 is dehydratase; sequence HALLGAVVER…YAYGPGFQGL (161 aa). Residues 935 to 1207 enclose the PKS/mFAS DH domain; it reads HALLGAVVER…TRAMSAAQLR (273 aa). Histidine 967 functions as the Proton acceptor; for dehydratase activity in the catalytic mechanism. Residues 1069–1207 form a C-terminal hotdog fold region; it reads AESVDISDGY…TRAMSAAQLR (139 aa). Aspartate 1128 acts as the Proton donor; for dehydratase activity in catalysis. The segment at 1400-1705 is enoylreductase; it reads GTLEDLVIEP…QARHIGKVVL (306 aa). Residues 1530–1547 and 1719–1734 contribute to the NADP(+) site; these read VLIHAGTGGVGMAAVQLA and TVLITGATGAVGAVLA. A beta-ketoacyl reductase (KR) region spans residues 1718–1899; that stretch reads ATVLITGATG…SVAWGLWEQS (182 aa). Residues 2004-2079 form the Carrier domain; that stretch reads DALVGLVCLQ…AIAEYVGRQI (76 aa). At serine 2039 the chain carries O-(pantetheine 4'-phosphoryl)serine. The interval 2081-2104 is disordered; it reads DSQATQAEEEKLPESDGEMVSVTA.

The protein belongs to the thiolase-like superfamily. Beta-ketoacyl-ACP synthases family. Pantetheine 4'-phosphate is required as a cofactor.

It carries out the reaction a fatty acyl-[ACP] + malonyl-[ACP] + H(+) = a 3-oxoacyl-[ACP] + holo-[ACP] + CO2. The protein operates within lipid metabolism; fatty acid biosynthesis. In terms of biological role, catalyzes the elongation by iterative transfer of p-hydroxybenzoyl group from FadD22 (pHBA-S-FAdD22) to form p-hydroxyphenylalkanoate (pHPA) intermediates during phenolphthiocerol (PPOL) biosynthesis. PPOL is an important intermediate in the biosynthesis of phenolic glycolipid (mycosid B). This is Phenolphthiocerol synthesis polyketide synthase type I Pks15/1 (pks15/1) from Mycobacterium marinum (strain ATCC BAA-535 / M).